A 335-amino-acid polypeptide reads, in one-letter code: MKTYYEQDANVGLLQGKTVAVIGYGSQGHAQAQNLRDSGVEVVVGVRPGKSFEVAKADGFKVMSVSEAVRTAQVVQMLLPDEQQAHVYKAEVEENLREGQMLLFSHGFNIHFGQINPPSYVDVAMVAPKSPGHLVRRVFQEGNGVPALVAVHQDATGTALHVALAYAKGVGCTRAGVIETTFQEETETDLFGEQAVLCGGVTALVKAGFETLTEGGYRPEIAYFECLHELKLIVDLMYEGGLTNMRHSISDTAEFGDYVTGSRIVTDETKKEMKRVLTEIQQGEFAKKWILENQAGRPTYNAMKKAEQNHQLEKVGEELREMMSWIHAPKELVKK.

In terms of domain architecture, KARI N-terminal Rossmann spans 1–180 (MKTYYEQDAN…GCTRAGVIET (180 aa)). NADP(+) contacts are provided by residues 24–27 (YGSQ), arginine 47, serine 51, and 81–84 (DEQQ). The active site involves histidine 106. Glycine 132 is an NADP(+) binding site. Positions 181–326 (TFQEETETDL…EELREMMSWI (146 aa)) constitute a KARI C-terminal knotted domain. The Mg(2+) site is built by aspartate 189, glutamate 193, glutamate 225, and glutamate 229. Serine 250 contacts substrate.

The protein belongs to the ketol-acid reductoisomerase family. It depends on Mg(2+) as a cofactor.

It catalyses the reaction (2R)-2,3-dihydroxy-3-methylbutanoate + NADP(+) = (2S)-2-acetolactate + NADPH + H(+). It carries out the reaction (2R,3R)-2,3-dihydroxy-3-methylpentanoate + NADP(+) = (S)-2-ethyl-2-hydroxy-3-oxobutanoate + NADPH + H(+). The protein operates within amino-acid biosynthesis; L-isoleucine biosynthesis; L-isoleucine from 2-oxobutanoate: step 2/4. It participates in amino-acid biosynthesis; L-valine biosynthesis; L-valine from pyruvate: step 2/4. Functionally, involved in the biosynthesis of branched-chain amino acids (BCAA). Catalyzes an alkyl-migration followed by a ketol-acid reduction of (S)-2-acetolactate (S2AL) to yield (R)-2,3-dihydroxy-isovalerate. In the isomerase reaction, S2AL is rearranged via a Mg-dependent methyl migration to produce 3-hydroxy-3-methyl-2-ketobutyrate (HMKB). In the reductase reaction, this 2-ketoacid undergoes a metal-dependent reduction by NADPH to yield (R)-2,3-dihydroxy-isovalerate. This chain is Ketol-acid reductoisomerase (NADP(+)) 2, found in Bacillus thuringiensis subsp. konkukian (strain 97-27).